We begin with the raw amino-acid sequence, 83 residues long: Short neurotoxin C (83 aa).

A signal peptide spans 1 to 21 (MKTLLLTLVVVTMVCLDLAYT). Cystine bridges form between Cys24–Cys45, Cys38–Cys62, Cys64–Cys75, and Cys76–Cys81.

The protein belongs to the three-finger toxin family. Short-chain subfamily. Type I alpha-neurotoxin sub-subfamily. Expressed by the venom gland.

Its subcellular location is the secreted. Functionally, binds to muscle nicotinic acetylcholine receptor (nAChR) and inhibit acetylcholine from binding to the receptor, thereby impairing neuromuscular transmission. The sequence is that of Short neurotoxin C from Laticauda colubrina (Yellow-lipped sea krait).